Reading from the N-terminus, the 266-residue chain is Cyclin-C (266 aa).

The 105-residue stretch at 47–151 (IIQVLGEQLK…LLENLDCCLI (105 aa)) folds into the Cyclin N-terminal domain.

It belongs to the cyclin family. Cyclin C subfamily. Component of the Cdk8 module of the Mediator complex.

The protein resides in the nucleus. Its function is as follows. Component of the Mediator complex, a coactivator involved in regulated gene transcription of nearly all RNA polymerase II-dependent genes. Mediator functions as a bridge to convey information from gene-specific regulatory proteins to the basal RNA polymerase II transcription machinery. Mediator is recruited to promoters by direct interactions with regulatory proteins and serves as a scaffold for the assembly of a functional preinitiation complex with RNA polymerase II and the general transcription factors. Binds to and activates cyclin-dependent kinase Cdk8 that phosphorylates the CTD (C-terminal domain) of the large subunit of RNA polymerase II (RNAp II), which may inhibit the formation of a transcription initiation complex. The polypeptide is Cyclin-C (CycC) (Anopheles gambiae (African malaria mosquito)).